A 94-amino-acid chain; its full sequence is Large ribosomal subunit protein eL42 (94 aa).

Zn(2+) contacts are provided by Cys11, Cys14, Cys70, and Cys73. The C4-type zinc-finger motif lies at 11 to 73; sequence CPYCKKHTIH…IDLRFKCTEC (63 aa).

Belongs to the eukaryotic ribosomal protein eL42 family. Part of the 50S ribosomal subunit. It depends on Zn(2+) as a cofactor.

In terms of biological role, binds to the 23S rRNA. This chain is Large ribosomal subunit protein eL42, found in Methanocaldococcus jannaschii (strain ATCC 43067 / DSM 2661 / JAL-1 / JCM 10045 / NBRC 100440) (Methanococcus jannaschii).